The primary structure comprises 149 residues: UPF0178 protein VC0395_A0405/VC395_0897 (149 aa).

Belongs to the UPF0178 family.

The protein is UPF0178 protein VC0395_A0405/VC395_0897 of Vibrio cholerae serotype O1 (strain ATCC 39541 / Classical Ogawa 395 / O395).